Consider the following 81-residue polypeptide: Large ribosomal subunit protein bL31B (81 aa).

It belongs to the bacterial ribosomal protein bL31 family. Type B subfamily. Part of the 50S ribosomal subunit.

The polypeptide is Large ribosomal subunit protein bL31B (Limosilactobacillus reuteri (strain DSM 20016) (Lactobacillus reuteri)).